Consider the following 88-residue polypeptide: Kunitz-type kappaPI-theraphotoxin-Hs1c (88 aa).

Positions 1-27 (MGIARILSAVLFLSVLFVVTFPALLSA) are cleaved as a signal peptide. The propeptide occupies 28-33 (DHHDGR). The BPTI/Kunitz inhibitor domain maps to 37-85 (CRLPSDRGRCKASFECWYFNGRTCAKFIYGGCGGNGNKFPTQEACMKRC). Cystine bridges form between C37/C85, C46/C68, and C60/C81.

It belongs to the venom Kunitz-type family. 02 (native) subfamily. As to expression, expressed by the venom gland.

It localises to the secreted. Its function is as follows. Serine protease inhibitor that inhibits trypsin (Ki=0.281 nM), kallikrein (Ki=337 nM), and chymotrypsin. This chain is Kunitz-type kappaPI-theraphotoxin-Hs1c, found in Cyriopagopus schmidti (Chinese bird spider).